The sequence spans 941 residues: Replicative DNA helicase DnaB (941 aa).

A disordered region spans residues 1-25 (MAEFEERPRLSIGEEEAPPYPLEKL). The SF4 helicase; first part domain occupies 214-484 (RPGGITGVPS…PVYRLTTRLG (271 aa)). 245–252 (ARPSMGKT) is a binding site for ATP. The DOD-type homing endonuclease domain maps to 534-683 (LLGHLIGDGC…VQSLLLRLGI (150 aa)). The SF4 helicase; second part domain maps to 646 to 915 (DGCIQMRRGK…ARFENLTMYQ (270 aa)). The interval 914-941 (YQPEPGTPLPETPDETILPSGPPDEAPF) is disordered.

This sequence belongs to the helicase family. DnaB subfamily. Homohexamer. Upon expression in E.coli this protein undergoes self splicing that involves a post-translational excision of the intervening region (intein) followed by peptide ligation.

The enzyme catalyses Couples ATP hydrolysis with the unwinding of duplex DNA at the replication fork by translocating in the 5'-3' direction. This creates two antiparallel DNA single strands (ssDNA). The leading ssDNA polymer is the template for DNA polymerase III holoenzyme which synthesizes a continuous strand.. The catalysed reaction is ATP + H2O = ADP + phosphate + H(+). In terms of biological role, the main replicative DNA helicase, it participates in initiation and elongation during chromosome replication. Travels ahead of the DNA replisome, separating dsDNA into templates for DNA synthesis. A processive ATP-dependent 5'-3' DNA helicase it has DNA-dependent ATPase activity. Its function is as follows. The intein is an endonuclease. The sequence is that of Replicative DNA helicase DnaB from Rhodothermus marinus (Rhodothermus obamensis).